The following is a 95-amino-acid chain: Aspartyl/glutamyl-tRNA(Asn/Gln) amidotransferase subunit C (95 aa).

The protein belongs to the GatC family. In terms of assembly, heterotrimer of A, B and C subunits.

It catalyses the reaction L-glutamyl-tRNA(Gln) + L-glutamine + ATP + H2O = L-glutaminyl-tRNA(Gln) + L-glutamate + ADP + phosphate + H(+). The catalysed reaction is L-aspartyl-tRNA(Asn) + L-glutamine + ATP + H2O = L-asparaginyl-tRNA(Asn) + L-glutamate + ADP + phosphate + 2 H(+). Functionally, allows the formation of correctly charged Asn-tRNA(Asn) or Gln-tRNA(Gln) through the transamidation of misacylated Asp-tRNA(Asn) or Glu-tRNA(Gln) in organisms which lack either or both of asparaginyl-tRNA or glutaminyl-tRNA synthetases. The reaction takes place in the presence of glutamine and ATP through an activated phospho-Asp-tRNA(Asn) or phospho-Glu-tRNA(Gln). The sequence is that of Aspartyl/glutamyl-tRNA(Asn/Gln) amidotransferase subunit C from Clostridium botulinum (strain ATCC 19397 / Type A).